The chain runs to 436 residues: Carboxypeptidase A5 (436 aa).

The first 33 residues, Met-1–Gly-33, serve as a signal peptide directing secretion. Positions Gln-34–Arg-126 are cleaved as a propeptide — activation peptide. The region spanning Ser-138–Thr-431 is the Peptidase M14 domain. Positions 196 and 199 each coordinate Zn(2+). Substrate is bound by residues His-196–Glu-199, Arg-254, and Asn-271–Arg-272. Cys-265 and Cys-288 are oxidised to a cystine. His-323 serves as a coordination point for Zn(2+). Substrate is bound by residues Ser-324–Tyr-325 and Tyr-375. The active-site Proton donor/acceptor is the Glu-397.

It belongs to the peptidase M14 family. The cofactor is Zn(2+).

It is found in the secreted. The protein is Carboxypeptidase A5 (CPA5) of Macaca fascicularis (Crab-eating macaque).